The chain runs to 468 residues: Factor XIIa inhibitor (468 aa).

Positions 1 to 23 (MASRLTPLTLLLLLLLAGDRVTS) are cleaved as a signal peptide. Positions 27–60 (VGPGNLQEGESEGDSQKGGILDGESIQGNEDSPT) are disordered. N-linked (GlcNAc...) asparagine glycosylation is found at N65, N176, N227, and N326. 2 disulfides stabilise this stretch: C97–C396 and C104–C179.

Belongs to the serpin family. N- and O-glycosylated.

The protein localises to the secreted. Functionally, may play a potentially crucial role in regulating important physiological pathways including complement activation, blood coagulation, fibrinolysis and the generation of kinins. The protein is Factor XIIa inhibitor of Bos taurus (Bovine).